The chain runs to 141 residues: Large ribosomal subunit protein uL11 (141 aa).

The protein belongs to the universal ribosomal protein uL11 family. Part of the ribosomal stalk of the 50S ribosomal subunit. Interacts with L10 and the large rRNA to form the base of the stalk. L10 forms an elongated spine to which L12 dimers bind in a sequential fashion forming a multimeric L10(L12)X complex. In terms of processing, one or more lysine residues are methylated.

Forms part of the ribosomal stalk which helps the ribosome interact with GTP-bound translation factors. This Ruegeria sp. (strain TM1040) (Silicibacter sp.) protein is Large ribosomal subunit protein uL11.